A 110-amino-acid polypeptide reads, in one-letter code: MSARLSIEVCYASAGEQALIAVELPEGATLRQALDASGILRRFPQIDLDTQKVGVFGKLKPLDAVLNDHDRVEIYRPLLVDPKVSRQRRVEKTRKAGSIEGRRWQNKDSR.

A disordered region spans residues 86-110 (RQRRVEKTRKAGSIEGRRWQNKDSR). Basic and acidic residues predominate over residues 100-110 (EGRRWQNKDSR).

Belongs to the UPF0125 (RnfH) family.

The polypeptide is Protein RnfH (Paraburkholderia xenovorans (strain LB400)).